Here is a 181-residue protein sequence, read N- to C-terminus: MRIAFFLLILSIIVGLAYGYSCPKPCYGNMCCSTSPDHKYYLTDFCGSTSACGPKPSCSGKLYFTADSQRFGCGKHLNLCRGKKCVKAKVYDAGPAEWVEKDAGKMIIDASPTICHELTGGSSCGWSDKFEITATVTSLTDSRPLGPFNVTEEEMDQLFIDHEIAMAQCEAEKTCNGFDLE.

A signal peptide spans 1 to 19 (MRIAFFLLILSIIVGLAYG). A propeptide spanning residues 139-181 (LTDSRPLGPFNVTEEEMDQLFIDHEIAMAQCEAEKTCNGFDLE) is cleaved from the precursor.

It belongs to the dictyostelium lysozyme family. In terms of processing, contains six disulfide bonds.

The protein localises to the cytoplasmic vesicle lumen. It carries out the reaction Hydrolysis of (1-&gt;4)-beta-linkages between N-acetylmuramic acid and N-acetyl-D-glucosamine residues in a peptidoglycan and between N-acetyl-D-glucosamine residues in chitodextrins.. Has antibacterial activity. The polypeptide is Lysozyme C (alyC) (Dictyostelium discoideum (Social amoeba)).